Consider the following 194-residue polypeptide: Adenylate kinase isoenzyme 1 (194 aa).

At Ala-2 the chain carries N-acetylalanine. 18-23 (GSGKGT) lines the ATP pocket. Positions 38–67 (SSGDLLRAEVASGSERGKQLQAIMQKGELV) are NMP. AMP is bound by residues Ser-39, Arg-44, 65-67 (ELV), 94-97 (GYPR), and Gln-101. The interval 131–141 (KRGQTSGRSDD) is LID. Arg-132 provides a ligand contact to ATP. The AMP site is built by Arg-138 and Arg-149. Residue Leu-177 participates in ATP binding.

Belongs to the adenylate kinase family. AK1 subfamily. Monomer. Mg(2+) serves as cofactor.

It localises to the cytoplasm. The catalysed reaction is a ribonucleoside 5'-phosphate + ATP = a ribonucleoside 5'-diphosphate + ADP. It catalyses the reaction AMP + ATP = 2 ADP. The enzyme catalyses dAMP + ATP = dADP + ADP. It carries out the reaction dATP + AMP = dADP + ADP. The catalysed reaction is dAMP + dATP = 2 dADP. It catalyses the reaction a 2'-deoxyribonucleoside 5'-diphosphate + ATP = a 2'-deoxyribonucleoside 5'-triphosphate + ADP. The enzyme catalyses a ribonucleoside 5'-diphosphate + ATP = a ribonucleoside 5'-triphosphate + ADP. It carries out the reaction CDP + GTP = CTP + GDP. The catalysed reaction is GDP + ATP = GTP + ADP. It catalyses the reaction UDP + ATP = UTP + ADP. The enzyme catalyses GTP + UDP = UTP + GDP. It carries out the reaction dTDP + GTP = dTTP + GDP. The catalysed reaction is dCDP + GTP = dCTP + GDP. It catalyses the reaction dGDP + ATP = dGTP + ADP. The enzyme catalyses dADP + GTP = dATP + GDP. It carries out the reaction thiamine diphosphate + ADP = thiamine triphosphate + AMP. Functionally, catalyzes the reversible transfer of the terminal phosphate group between ATP and AMP. Also displays broad nucleoside diphosphate kinase activity. Plays an important role in cellular energy homeostasis and in adenine nucleotide metabolism. Also catalyzes at a very low rate the synthesis of thiamine triphosphate (ThTP) from thiamine diphosphate (ThDP) and ADP. This is Adenylate kinase isoenzyme 1 (ak1) from Cyprinus carpio (Common carp).